The chain runs to 552 residues: MDPAWDGSQGSRPGTASIRVRELSWQGLNNPHPQNKRLGSHGDIHRERWVEERLSPARLQALAQVDDLQLVRVLEMCVDTRKNSLGNFGLYLPNLIQLKLNHSYLGSLRDLGTSLGHLQVLWLARCGLTDLDGIGSFLELKELYVSYNNISDLSPLCLLEQLEVLDLEGNNVEDLGQMRYLQLCPRLAMLTLEGNLVCLKPDPGPSNKAPQGYNYRAEVKKLIPQLHVLDEVPTTCTSAPAPQTLSQDWLMVKEAIKEGSVLDILLPRLDDPHGATIRKFDPTLPVPETQPWALSLLVPGGPLPEGLLSENPATEDHASNLTHGPGQVLCGNPTKGLRKRRNQYQEWAPLEQMPPHRPDLAIRPSTPRPDPAESCDLAMTGLRAWTEPGLRPLLQRQLEFQQERSAQVQAQDPQKDPVEQEDQTGPKTSLTPPRLVSELSRTSGFHLIPSPPKYPMPPESGISSLGRSADLPFRGRRLRVLGSLGPSLGEGSVLGERLAAVTALRALEASSGPSHRAQGCPDPKPALGPAACPPGLHCLHHLNPIPPAHSLP.

LRR repeat units lie at residues 94 to 115 (NLIQLKLNHSYLGSLRDLGTSL), 117 to 138 (HLQVLWLARCGLTDLDGIGSFL), 139 to 160 (ELKELYVSYNNISDLSPLCLLE), 161 to 182 (QLEVLDLEGNNVEDLGQMRYLQ), and 186 to 206 (RLAMLTLEGNLVCLKPDPGPS). 2 disordered regions span residues 348 to 375 (APLEQMPPHRPDLAIRPSTPRPDPAESC) and 401 to 435 (QQERSAQVQAQDPQKDPVEQEDQTGPKTSLTPPRL).

Belongs to the LRRC56 family. Interacts with IFT88.

Its subcellular location is the cell projection. It localises to the cilium. Its function is as follows. Required for the assembly of dynein arms. This is Leucine-rich repeat-containing protein 56 (Lrrc56) from Mus musculus (Mouse).